A 460-amino-acid chain; its full sequence is Chromosomal replication initiator protein DnaA (460 aa).

Residues 1 to 78 (MENFWQACSA…VPVEVQFVLD (78 aa)) form a domain I, interacts with DnaA modulators region. The segment at 78–123 (DPRLVAARRPAAQASVVSDRADDVPSNVLEPIPSNATDHTPRRDQS) is domain II. A domain III, AAA+ region region spans residues 124–340 (RINTALTFDS…GALRKILAYS (217 aa)). Gly-168, Gly-170, Lys-171, and Thr-172 together coordinate ATP. The segment at 341 to 460 (RFHGKDITIE…LHVLEQTLKG (120 aa)) is domain IV, binds dsDNA.

Belongs to the DnaA family. As to quaternary structure, oligomerizes as a right-handed, spiral filament on DNA at oriC.

It is found in the cytoplasm. Plays an essential role in the initiation and regulation of chromosomal replication. ATP-DnaA binds to the origin of replication (oriC) to initiate formation of the DNA replication initiation complex once per cell cycle. Binds the DnaA box (a 9 base pair repeat at the origin) and separates the double-stranded (ds)DNA. Forms a right-handed helical filament on oriC DNA; dsDNA binds to the exterior of the filament while single-stranded (ss)DNA is stabiized in the filament's interior. The ATP-DnaA-oriC complex binds and stabilizes one strand of the AT-rich DNA unwinding element (DUE), permitting loading of DNA polymerase. After initiation quickly degrades to an ADP-DnaA complex that is not apt for DNA replication. Binds acidic phospholipids. The polypeptide is Chromosomal replication initiator protein DnaA (Herminiimonas arsenicoxydans).